We begin with the raw amino-acid sequence, 265 residues long: MKAYLDLMRHVLDNGTDKSDRTGTGTLSVFGYQMRFDLGKGFPLLTTKKLHLRSIIHELLWFLKGDTNIKYLKDNNVSIWDDEWADENGDLGPVYGYQWRSWPAPDGRHIDQIANVVEQIKKNPDSRRLIVSAWNPALVDEMALPPCHALFQFYVADGNLSCQLYQRSADIFLGVPFNIASYALLTMMMAQVCGLEAGEFVHTFGDAHLYRNHFEQAALQLEREPRALPVMKINPEVKDLFAFKFEDFELEGYDPHPHIKAVVSV.

Residue arginine 21 coordinates dUMP. Histidine 51 provides a ligand contact to (6R)-5,10-methylene-5,6,7,8-tetrahydrofolate. Residue 127-128 (RR) coordinates dUMP. Residue cysteine 147 is the Nucleophile of the active site. DUMP-binding positions include 167 to 170 (RSAD), asparagine 178, and 208 to 210 (HLY). Residue aspartate 170 coordinates (6R)-5,10-methylene-5,6,7,8-tetrahydrofolate. Position 264 (serine 264) interacts with (6R)-5,10-methylene-5,6,7,8-tetrahydrofolate.

This sequence belongs to the thymidylate synthase family. Bacterial-type ThyA subfamily. Homodimer.

The protein resides in the cytoplasm. The catalysed reaction is dUMP + (6R)-5,10-methylene-5,6,7,8-tetrahydrofolate = 7,8-dihydrofolate + dTMP. The protein operates within pyrimidine metabolism; dTTP biosynthesis. Catalyzes the reductive methylation of 2'-deoxyuridine-5'-monophosphate (dUMP) to 2'-deoxythymidine-5'-monophosphate (dTMP) while utilizing 5,10-methylenetetrahydrofolate (mTHF) as the methyl donor and reductant in the reaction, yielding dihydrofolate (DHF) as a by-product. This enzymatic reaction provides an intracellular de novo source of dTMP, an essential precursor for DNA biosynthesis. In Neisseria gonorrhoeae, this protein is Thymidylate synthase.